The sequence spans 105 residues: Malonate decarboxylase acyl carrier protein (105 aa).

An O-(phosphoribosyl dephospho-coenzyme A)serine modification is found at Ser-28.

Belongs to the MdcC family. Post-translationally, covalently binds the prosthetic group of malonate decarboxylase.

Its subcellular location is the cytoplasm. Its function is as follows. Subunit of malonate decarboxylase, it is an acyl carrier protein to which acetyl and malonyl thioester residues are bound via a 2'-(5''-phosphoribosyl)-3'-dephospho-CoA prosthetic group and turn over during the catalytic mechanism. The protein is Malonate decarboxylase acyl carrier protein of Xanthomonas axonopodis pv. citri (strain 306).